Here is a 473-residue protein sequence, read N- to C-terminus: Mitochondrial adenyl nucleotide antiporter SLC25A24-A (473 aa).

A regulatory N-terminal domain region spans residues 1 to 173 (MLEQVQKFLL…RFWKHSTVLD (173 aa)). Over 1–197 (MLEQVQKFLL…EKKTGQWWKH (197 aa)) the chain is Mitochondrial intermembrane. EF-hand domains follow at residues 19–54 (DSHT…MGMA), 55–88 (VGKG…EEHE), 86–121 (EHEK…LGIN), and 122–157 (ISLD…NPAD). Residues D32, N34, D36, K38, E43, D68, N70, D72, H74, E79, D99, N101, D103, K105, E110, D135, D137, T139, T141, and E146 each contribute to the Ca(2+) site. A linker region region spans residues 159-168 (IQQIIRFWKH). A C-terminal transmembrane transporter domain region spans residues 174 to 473 (IGDSLTIPDE…YEKMKIQLGI (300 aa)). Solcar repeat units follow at residues 192–277 (GQWW…YKKL), 285–370 (LGTA…LKNY), and 382–470 (PGVL…MKIQ). The helical transmembrane segment at 198–215 (LLAGGMAGAVSRTGTAPL) threads the bilayer. Residues 216 to 251 (DRLKVMMQVHGTKGNSNIITGLKQMVKEGGVRSLWR) are Mitochondrial matrix-facing. The chain crosses the membrane as a helical span at residues 252–271 (GNGVNVIKIAPETAMKFWAY). The Mitochondrial intermembrane portion of the chain corresponds to 272-294 (EQYKKLFTSESGKLGTAERFIAG). The helical transmembrane segment at 295 to 308 (SLAGATAQTSIYPM) threads the bilayer. The Mitochondrial matrix portion of the chain corresponds to 309–344 (EVLKTRLAVGKTGQYSGMFDCAKKIMQKEGILAFYK). Residues 345-364 (GYIPNILGIIPYAGIDLAIY) traverse the membrane as a helical segment. The Mitochondrial intermembrane portion of the chain corresponds to 365–387 (ETLKNYWLQNYAKDSANPGVLVL). Residues 388-405 (LGCGTVSSTCGQLASYPL) form a helical membrane-spanning segment. Residues 406 to 444 (ALIRTRMQAQASIEGAPQLNMGGLFRKIVAKEGFFGLYT) are Mitochondrial matrix-facing. The helical transmembrane segment at 445 to 464 (GIAPNFLKVLPAVSISYVVY) threads the bilayer. The Mitochondrial intermembrane portion of the chain corresponds to 465–473 (EKMKIQLGI).

Belongs to the mitochondrial carrier (TC 2.A.29) family. As to quaternary structure, monomer.

The protein resides in the mitochondrion inner membrane. The enzyme catalyses Mg(2+)(out) + phosphate(in) + ATP(out) = Mg(2+)(in) + phosphate(out) + ATP(in). It carries out the reaction ADP(out) + phosphate(in) + H(+)(out) = ADP(in) + phosphate(out) + H(+)(in). It catalyses the reaction AMP(out) + phosphate(in) = AMP(in) + phosphate(out). The catalysed reaction is phosphate(in) + ATP(out) + 2 H(+)(out) = phosphate(out) + ATP(in) + 2 H(+)(in). The enzyme catalyses dADP(in) + ADP(out) = dADP(out) + ADP(in). It carries out the reaction Mg(2+)(in) + ADP(out) + ATP(in) + H(+)(out) = Mg(2+)(out) + ADP(in) + ATP(out) + H(+)(in). It catalyses the reaction ADP(out) + diphosphate(in) = ADP(in) + diphosphate(out). The catalysed reaction is dAMP(in) + ADP(out) + H(+)(out) = dAMP(out) + ADP(in) + H(+)(in). The enzyme catalyses 3'-AMP(in) + ADP(out) + H(+)(out) = 3'-AMP(out) + ADP(in) + H(+)(in). It carries out the reaction dAMP(out) + phosphate(in) = dAMP(in) + phosphate(out). It catalyses the reaction 3'-AMP(out) + phosphate(in) = 3'-AMP(in) + phosphate(out). The catalysed reaction is dADP(out) + phosphate(in) + H(+)(out) = dADP(in) + phosphate(out) + H(+)(in). Activated by an increase in cytosolic calcium levels that induce a conformational change of the N-terminal regulatory domain, uncapping the channel and allowing transport. Inhibited by bathophenanthroline, mersalyl, p-hydroxymercuribenzoate, bromcresol purple and tannic acid. Its function is as follows. Electroneutral antiporter that mediates the transport of adenyl nucleotides through the inner mitochondrial membrane. Originally identified as an ATP-magnesium/inorganic phosphate antiporter, it also acts as a broad specificity adenyl nucleotide antiporter. By regulating the mitochondrial matrix adenyl nucleotide pool could adapt to changing cellular energetic demands and indirectly regulate adenyl nucleotide-dependent metabolic pathways. This chain is Mitochondrial adenyl nucleotide antiporter SLC25A24-A (slc25a24-a), found in Xenopus laevis (African clawed frog).